The following is a 337-amino-acid chain: Ketol-acid reductoisomerase (NADP(+)) (337 aa).

One can recognise a KARI N-terminal Rossmann domain in the interval M1–T180. Residues Y22 to Q25, R46, S49, S51, and D81 to Q84 contribute to the NADP(+) site. H106 is a catalytic residue. G132 contacts NADP(+). One can recognise a KARI C-terminal knotted domain in the interval T181–I326. Residues D189, E193, E225, and E229 each coordinate Mg(2+). S250 contacts substrate.

It belongs to the ketol-acid reductoisomerase family. It depends on Mg(2+) as a cofactor.

The enzyme catalyses (2R)-2,3-dihydroxy-3-methylbutanoate + NADP(+) = (2S)-2-acetolactate + NADPH + H(+). The catalysed reaction is (2R,3R)-2,3-dihydroxy-3-methylpentanoate + NADP(+) = (S)-2-ethyl-2-hydroxy-3-oxobutanoate + NADPH + H(+). It participates in amino-acid biosynthesis; L-isoleucine biosynthesis; L-isoleucine from 2-oxobutanoate: step 2/4. The protein operates within amino-acid biosynthesis; L-valine biosynthesis; L-valine from pyruvate: step 2/4. Its function is as follows. Involved in the biosynthesis of branched-chain amino acids (BCAA). Catalyzes an alkyl-migration followed by a ketol-acid reduction of (S)-2-acetolactate (S2AL) to yield (R)-2,3-dihydroxy-isovalerate. In the isomerase reaction, S2AL is rearranged via a Mg-dependent methyl migration to produce 3-hydroxy-3-methyl-2-ketobutyrate (HMKB). In the reductase reaction, this 2-ketoacid undergoes a metal-dependent reduction by NADPH to yield (R)-2,3-dihydroxy-isovalerate. The sequence is that of Ketol-acid reductoisomerase (NADP(+)) from Pelagibacter ubique (strain HTCC1062).